The following is a 76-amino-acid chain: Acyl carrier protein (76 aa).

Residues 1-76 (MALLDDVKAV…DAIKYIENNA (76 aa)) enclose the Carrier domain. The residue at position 36 (serine 36) is an O-(pantetheine 4'-phosphoryl)serine.

The protein belongs to the acyl carrier protein (ACP) family. 4'-phosphopantetheine is transferred from CoA to a specific serine of apo-ACP by AcpS. This modification is essential for activity because fatty acids are bound in thioester linkage to the sulfhydryl of the prosthetic group.

The protein resides in the cytoplasm. It participates in lipid metabolism; fatty acid biosynthesis. In terms of biological role, carrier of the growing fatty acid chain in fatty acid biosynthesis. The chain is Acyl carrier protein from Aliarcobacter butzleri (strain RM4018) (Arcobacter butzleri).